Consider the following 445-residue polypeptide: Argininosuccinate synthase (445 aa).

Residues 17–25 (AFSGGLDTS) and Ala43 each bind ATP. Residue Tyr99 coordinates L-citrulline. Residues Gly129 and Thr131 each coordinate ATP. L-aspartate contacts are provided by Thr131, Asn135, and Asp136. Position 135 (Asn135) interacts with L-citrulline. Position 136 (Asp136) interacts with ATP. L-citrulline is bound by residues Arg139 and Ser192. Residue Asp194 participates in ATP binding. L-citrulline is bound by residues Thr201, Glu203, and Glu280.

This sequence belongs to the argininosuccinate synthase family. Type 2 subfamily. In terms of assembly, homotetramer.

It localises to the cytoplasm. The enzyme catalyses L-citrulline + L-aspartate + ATP = 2-(N(omega)-L-arginino)succinate + AMP + diphosphate + H(+). It functions in the pathway amino-acid biosynthesis; L-arginine biosynthesis; L-arginine from L-ornithine and carbamoyl phosphate: step 2/3. This is Argininosuccinate synthase from Afipia carboxidovorans (strain ATCC 49405 / DSM 1227 / KCTC 32145 / OM5) (Oligotropha carboxidovorans).